The primary structure comprises 255 residues: Imidazole glycerol phosphate synthase subunit HisF (255 aa).

Residues D12 and D131 contribute to the active site.

Belongs to the HisA/HisF family. Heterodimer of HisH and HisF.

Its subcellular location is the cytoplasm. The catalysed reaction is 5-[(5-phospho-1-deoxy-D-ribulos-1-ylimino)methylamino]-1-(5-phospho-beta-D-ribosyl)imidazole-4-carboxamide + L-glutamine = D-erythro-1-(imidazol-4-yl)glycerol 3-phosphate + 5-amino-1-(5-phospho-beta-D-ribosyl)imidazole-4-carboxamide + L-glutamate + H(+). The protein operates within amino-acid biosynthesis; L-histidine biosynthesis; L-histidine from 5-phospho-alpha-D-ribose 1-diphosphate: step 5/9. In terms of biological role, IGPS catalyzes the conversion of PRFAR and glutamine to IGP, AICAR and glutamate. The HisF subunit catalyzes the cyclization activity that produces IGP and AICAR from PRFAR using the ammonia provided by the HisH subunit. The chain is Imidazole glycerol phosphate synthase subunit HisF from Neisseria meningitidis serogroup C (strain 053442).